The primary structure comprises 127 residues: UPF0102 protein ERGA_CDS_00540 (127 aa).

The protein belongs to the UPF0102 family.

This is UPF0102 protein ERGA_CDS_00540 from Ehrlichia ruminantium (strain Gardel).